The primary structure comprises 81 residues: Putative membrane protein insertion efficiency factor 1 (81 aa).

This sequence belongs to the UPF0161 family.

It localises to the cell membrane. Its function is as follows. Could be involved in insertion of integral membrane proteins into the membrane. This Bacillus licheniformis (strain ATCC 14580 / DSM 13 / JCM 2505 / CCUG 7422 / NBRC 12200 / NCIMB 9375 / NCTC 10341 / NRRL NRS-1264 / Gibson 46) protein is Putative membrane protein insertion efficiency factor 1.